The primary structure comprises 245 residues: MIKLVLIRHGQSLWNLENRFTGWTDVDLSENGLSEAREAGAILKKNGYTFDVAYTSVLKRAIRTLWIVLHEMNLAWVPVHKSWKLNERHYGALQGLNKDETAQKYGEEQVHIWRRSIDVRPPALTEDDPRYEMNDPRYKTLKKGEFPLTECLVDTEKRVLAYWHSEIAPKLKDGNKVIISSHGNTIRSLVKYLDNLSSDGVVSLNIPTSIPLVYELDENLRPIRHYYLSMDGEVPEGEIPKHITF.

Residues 8-15 (RHGQSLWN), 21-22 (TG), R60, 87-90 (ERHY), K98, 114-115 (RR), and 183-184 (GN) contribute to the substrate site. H9 functions as the Tele-phosphohistidine intermediate in the catalytic mechanism. The Proton donor/acceptor role is filled by E87.

Belongs to the phosphoglycerate mutase family. BPG-dependent PGAM subfamily.

The enzyme catalyses (2R)-2-phosphoglycerate = (2R)-3-phosphoglycerate. It participates in carbohydrate degradation; glycolysis; pyruvate from D-glyceraldehyde 3-phosphate: step 3/5. Functionally, catalyzes the interconversion of 2-phosphoglycerate and 3-phosphoglycerate. In Bacillus thuringiensis subsp. konkukian (strain 97-27), this protein is 2,3-bisphosphoglycerate-dependent phosphoglycerate mutase.